The following is a 408-amino-acid chain: uncharacterized protein (408 aa).

A compositionally biased stretch (polar residues) spans 376–386 (NELNDPNSVYN). The segment at 376 to 408 (NELNDPNSVYNSPEFDHQGDQKKLTEENGCVVQ) is disordered. Positions 389–401 (EFDHQGDQKKLTE) are enriched in basic and acidic residues.

This is an uncharacterized protein from Acanthamoeba polyphaga (Amoeba).